Reading from the N-terminus, the 539-residue chain is MLLPLACLHGRVAQCLTSLLVLAEPFPRPRRGAKARGAAPTSAEPAPAVAKMAAELYPPASPSAATATDIANSNAAGAAESTKVGLCCPPCLAPAPLPPLPAPPLPDNNNPESPNWQSFHPTLRERNALMFNNELMADVHFIVGALGAARRVPAHKYVLAVGSSVFYAMFYGDLAEVKSEIHIPDVEPAAFLVLLKYMYSDEIDLEADTVLATLYAAKKYIVPALAKACVNFLETSLEAKNACVLLSQSRLFEEPELTQRCWEVIDAQAEMALRSEGFCEIDRQTLEIIVTREALNTKEAVVFEAVLNWAEAECKRQGLPVTPHNKRHVLGRALYLVRIPTMTLEEFANGAAQSDILTLEETHNIFLWYTAAKKPLLDFPLTKRKGLAPQRCHRFQSSAYRSNQWRYRGRCDSIQFAVDRRVFIAGLGLYGSSSGKAEYSVKIELKRLGMVLAQNLTKFVSDGSSNTFPVWFEHPVQVEQDTFYTASAVLDGSELSYFGQEGMTEVQCGKVAFQFQCSSDSTNGTGVQGGQIPELIFYA.

A signal peptide spans 1 to 23; the sequence is MLLPLACLHGRVAQCLTSLLVLA. A BTB domain is found at 137–207; it reads ADVHFIVGAL…MYSDEIDLEA (71 aa).

It is found in the cytoplasm. Adapter protein for the cul3 E3 ubiquitin-protein ligase complex. Involved in late neuronal development and muscle formation. In Mus musculus (Mouse), this protein is BTB/POZ domain-containing protein 6 (Btbd6).